The sequence spans 123 residues: Small ribosomal subunit protein uS13 (123 aa).

The tract at residues 95–123 (GLPVRGQKTKTNARTRKGPKRTVGRKKKK) is disordered. Over residues 101-123 (QKTKTNARTRKGPKRTVGRKKKK) the composition is skewed to basic residues.

The protein belongs to the universal ribosomal protein uS13 family. As to quaternary structure, part of the 30S ribosomal subunit. Forms a loose heterodimer with protein S19. Forms two bridges to the 50S subunit in the 70S ribosome.

Functionally, located at the top of the head of the 30S subunit, it contacts several helices of the 16S rRNA. In the 70S ribosome it contacts the 23S rRNA (bridge B1a) and protein L5 of the 50S subunit (bridge B1b), connecting the 2 subunits; these bridges are implicated in subunit movement. Contacts the tRNAs in the A and P-sites. The protein is Small ribosomal subunit protein uS13 of Alkaliphilus metalliredigens (strain QYMF).